Consider the following 60-residue polypeptide: Large ribosomal subunit protein bL32 (60 aa).

The segment at 1-60 (MAVQQNKKSPSKRGMHRSHDFLVNPPTAIEPTTGESHLRHHISPNGFYRGRKILKTKADE) is disordered. Basic residues predominate over residues 49–60 (RGRKILKTKADE).

It belongs to the bacterial ribosomal protein bL32 family.

This chain is Large ribosomal subunit protein bL32, found in Bordetella avium (strain 197N).